We begin with the raw amino-acid sequence, 1842 residues long: RNA1 polyprotein (1842 aa).

Positions 458 to 626 (LDKLTELHNS…MAYDPGNPCA (169 aa)) constitute an SF3 helicase domain. An ATP-binding site is contributed by 487 to 494 (GKSGVGKT). A helical transmembrane segment spans residues 883–903 (LWSISGNASFVAGAASIFTIG). The residue at position 909 (Ser909) is an O-(5'-phospho-RNA)-serine. Residues 935–1137 (GPCFGDSALW…ASPVPWDPDF (203 aa)) form the Peptidase C3 domain. Residues His975, Glu1011, and Cys1100 each act as for picornain 3C-like protease activity in the active site. Residues 1417 to 1544 (NSILCCDYSR…SVSEAISSKF (128 aa)) form the RdRp catalytic domain.

In terms of processing, specific enzymatic cleavages by picornain 3C-like protease in vivo yield mature proteins. Picornain 3C-like protease is autocatalytically processed. Uridylylated by the polymerase and is covalently linked to the 5'-end of genomic RNA. This uridylylated form acts as a nucleotide-peptide primer for the polymerase.

It localises to the host membrane. The protein resides in the host cytoplasm. The protein localises to the host perinuclear region. Its subcellular location is the host endoplasmic reticulum. The catalysed reaction is RNA(n) + a ribonucleoside 5'-triphosphate = RNA(n+1) + diphosphate. In terms of biological role, thiol protease that cleaves the RNA1 and RNA2 polyproteins. Its function is as follows. Plays a role in RNA replication. It is covalently linked to the 5'terminus of both viral single-stranded RNA1 and RNA2 molecules. Down-regulates the RNA1 polyprotein processing and enhances trans-cleavage of RNA2 polyproteins. The protease cofactor and the putative helicase seem to target the replication complexes to ER membranes. Their physical association causes the membrane rearrangement of host ER that may result in formation of the small membranous vesicles that are the site of viral RNA synthesis. Functionally, the protease cofactor and the putative helicase seem to target the replication complexes to ER membranes. Their physical association causes the membrane rearrangement of host ER that may result in formation of the small membranous vesicles that are the site of viral RNA synthesis. In terms of biological role, replicates the viral genome. The polypeptide is RNA1 polyprotein (RNA1) (Capsicum annuum (Capsicum pepper)).